The chain runs to 243 residues: MPEARDRTERPVDYSTIFANRRRHGILLDEPDSRLSLIESPVNPDIGSIGGTGGLVRGNFTTWRPGNGRGGHTPFRLPQGRENMPIVTARRGRGGGLLPSWYPRTPLRDITHIVRAIERRRGAGTGGDDGRVIEIPTHRQVGVLESPVPLSGEHKCSMVTPGPSVGFKRSCPPSTAKVQKMLLDITKEIAEEEAGFITPEKKLLNSIDKVEKIVMAEIQKLKSTPQAKREEREKRVRTLMTMR.

Interacts with APC/C activators such as FZR1, FZR2, FZR3, CDC20.1 and CDC20.5. In terms of processing, phosphorylated by CDKA-1 in complex with CYCA1-2. As to expression, expressed in rapidly dividing tissues such as shoot apical meristem and young leaves. Associated with cell division but also with specific cell types.

Its function is as follows. Negative regulator of the anaphase-promoting complex/cyclosome (APC/C) ubiquitin ligase required for proper mitotic and meiotic progression and cell fate determination. Involved in entry into both meiosis I and meiosis II. Prevents endomitosis by preferentially inhibiting APC/C(CDC20). Required for megagametophyte and endosperm development. Triggers mitotic cyclins (e.g. CYCB1-1 and CYCB1-2) accumulation. Confers immunity to bacterial pathogens (e.g. Pseudomonas syringae pv. tomato DC3000), which is associated with increased expression of disease resistance (R) genes. GIG1 and PANS1 are part of a network linking centromere cohesion and cell cycle progression through control of APC/C activity. This Arabidopsis thaliana (Mouse-ear cress) protein is Protein GIGAS CELL1 (GIG1).